The primary structure comprises 196 residues: Peptidyl-tRNA hydrolase (196 aa).

Tyr-18 contributes to the tRNA binding site. His-23 functions as the Proton acceptor in the catalytic mechanism. TRNA is bound by residues Phe-69, Asn-71, and Asn-117.

The protein belongs to the PTH family. As to quaternary structure, monomer.

Its subcellular location is the cytoplasm. It catalyses the reaction an N-acyl-L-alpha-aminoacyl-tRNA + H2O = an N-acyl-L-amino acid + a tRNA + H(+). Its function is as follows. Hydrolyzes ribosome-free peptidyl-tRNAs (with 1 or more amino acids incorporated), which drop off the ribosome during protein synthesis, or as a result of ribosome stalling. Functionally, catalyzes the release of premature peptidyl moieties from peptidyl-tRNA molecules trapped in stalled 50S ribosomal subunits, and thus maintains levels of free tRNAs and 50S ribosomes. This chain is Peptidyl-tRNA hydrolase, found in Vibrio parahaemolyticus serotype O3:K6 (strain RIMD 2210633).